The sequence spans 456 residues: Bifunctional protein GlmU (456 aa).

The tract at residues 1-229 (MTKKALSAVI…VMEVEGANNR (229 aa)) is pyrophosphorylase. UDP-N-acetyl-alpha-D-glucosamine-binding positions include 11 to 14 (LAAG), K25, Q76, 81 to 82 (GT), 103 to 105 (YGD), G140, E154, N169, and N227. D105 is a binding site for Mg(2+). Residue N227 coordinates Mg(2+). Residues 230–250 (LQLAALERYLQNKQASKLLLE) are linker. The tract at residues 251-456 (GVMIYDPARF…QGWQRPIKKK (206 aa)) is N-acetyltransferase. Residues R333 and K351 each contribute to the UDP-N-acetyl-alpha-D-glucosamine site. H363 serves as the catalytic Proton acceptor. UDP-N-acetyl-alpha-D-glucosamine is bound by residues Y366 and N377. Residues A380, 386 to 387 (NY), S405, A423, and R440 contribute to the acetyl-CoA site.

In the N-terminal section; belongs to the N-acetylglucosamine-1-phosphate uridyltransferase family. It in the C-terminal section; belongs to the transferase hexapeptide repeat family. In terms of assembly, homotrimer. The cofactor is Mg(2+).

It is found in the cytoplasm. It catalyses the reaction alpha-D-glucosamine 1-phosphate + acetyl-CoA = N-acetyl-alpha-D-glucosamine 1-phosphate + CoA + H(+). It carries out the reaction N-acetyl-alpha-D-glucosamine 1-phosphate + UTP + H(+) = UDP-N-acetyl-alpha-D-glucosamine + diphosphate. It functions in the pathway nucleotide-sugar biosynthesis; UDP-N-acetyl-alpha-D-glucosamine biosynthesis; N-acetyl-alpha-D-glucosamine 1-phosphate from alpha-D-glucosamine 6-phosphate (route II): step 2/2. Its pathway is nucleotide-sugar biosynthesis; UDP-N-acetyl-alpha-D-glucosamine biosynthesis; UDP-N-acetyl-alpha-D-glucosamine from N-acetyl-alpha-D-glucosamine 1-phosphate: step 1/1. It participates in bacterial outer membrane biogenesis; LPS lipid A biosynthesis. In terms of biological role, catalyzes the last two sequential reactions in the de novo biosynthetic pathway for UDP-N-acetylglucosamine (UDP-GlcNAc). The C-terminal domain catalyzes the transfer of acetyl group from acetyl coenzyme A to glucosamine-1-phosphate (GlcN-1-P) to produce N-acetylglucosamine-1-phosphate (GlcNAc-1-P), which is converted into UDP-GlcNAc by the transfer of uridine 5-monophosphate (from uridine 5-triphosphate), a reaction catalyzed by the N-terminal domain. The protein is Bifunctional protein GlmU of Haemophilus influenzae (strain PittEE).